The sequence spans 160 residues: Dihydrofolate reductase (160 aa).

A DHFR domain is found at 1 to 160 (MVKAIWAMDQ…KVAYYHKIAR (160 aa)). 5–7 (IWA) lines the substrate pocket. NADP(+) is bound by residues 6-7 (WA) and 14-19 (IGNGNS). Residues E27 and R32 each contribute to the substrate site. NADP(+) is bound at residue 43–46 (GSAT). Residue R57 participates in substrate binding. NADP(+)-binding positions include 62-65 (LTRN) and 101-106 (CGGAQV). S120 provides a ligand contact to substrate.

Belongs to the dihydrofolate reductase family.

It carries out the reaction (6S)-5,6,7,8-tetrahydrofolate + NADP(+) = 7,8-dihydrofolate + NADPH + H(+). The protein operates within cofactor biosynthesis; tetrahydrofolate biosynthesis; 5,6,7,8-tetrahydrofolate from 7,8-dihydrofolate: step 1/1. Its function is as follows. Key enzyme in folate metabolism. Catalyzes an essential reaction for de novo glycine and purine synthesis, and for DNA precursor synthesis. The chain is Dihydrofolate reductase (folA) from Mycoplasma pneumoniae (strain ATCC 29342 / M129 / Subtype 1) (Mycoplasmoides pneumoniae).